The primary structure comprises 95 residues: Large ribosomal subunit protein bL25 (95 aa).

Belongs to the bacterial ribosomal protein bL25 family. In terms of assembly, part of the 50S ribosomal subunit; part of the 5S rRNA/L5/L18/L25 subcomplex. Contacts the 5S rRNA. Binds to the 5S rRNA independently of L5 and L18.

Its function is as follows. This is one of the proteins that binds to the 5S RNA in the ribosome where it forms part of the central protuberance. In Tolumonas auensis (strain DSM 9187 / NBRC 110442 / TA 4), this protein is Large ribosomal subunit protein bL25.